Reading from the N-terminus, the 404-residue chain is Adenosylhomocysteinase (404 aa).

Substrate is bound by residues Asp114 and Glu139. Residue 140 to 142 coordinates NAD(+); it reads TTT. Lys169 and Asp173 together coordinate substrate. Residues Asn174, 203–208, Glu226, Asn261, 282–284, and Asn329 each bind NAD(+); these read GYGWCG and AGH.

The protein belongs to the adenosylhomocysteinase family. It depends on NAD(+) as a cofactor.

The protein localises to the cytoplasm. It catalyses the reaction S-adenosyl-L-homocysteine + H2O = L-homocysteine + adenosine. Its pathway is amino-acid biosynthesis; L-homocysteine biosynthesis; L-homocysteine from S-adenosyl-L-homocysteine: step 1/1. Functionally, may play a key role in the regulation of the intracellular concentration of adenosylhomocysteine. The polypeptide is Adenosylhomocysteinase (Thermotoga maritima (strain ATCC 43589 / DSM 3109 / JCM 10099 / NBRC 100826 / MSB8)).